Here is a 369-residue protein sequence, read N- to C-terminus: MYTKLRSIQSGTFSTVYKAWSTTHNRYVALKITPKYKTSEANMKNEYDVMKILSSCNPHPNICSMLDFYTDDSYYIMVLEYCECGDLYDFLDIAKSQGSPSSPSLIQIDMQKIIKQLCSAISFAHSLGIAHRDIKPENILLTINGDIKLADWGHAIQSPKSNDFQIGTDNYRAPETFSGRVSNSCFKKNFDRSSAPLYNTYQADYWSLGATIFYLMFGDCLFRVSKSKKVQHLKNFDEFEKDPFAFIYRKYVVPRLSCGYNDEEDLHVSLQHTRQYIWQDLPDIYDVFHLCKIMVDTLLKVSNAKERSMENFINEVDSAWNKDSSMDSCFSYQNKIDLFWEQWSVNTETVPAKFQLKNFEKPCLIQDGK.

Residues 2 to 369 (YTKLRSIQSG…EKPCLIQDGK (368 aa)) form the Protein kinase domain. Residues 8–16 (IQSGTFSTV) and Lys31 each bind ATP. The active-site Proton acceptor is the Asp133.

It belongs to the protein kinase superfamily. Ser/Thr protein kinase family.

It localises to the mitochondrion. It catalyses the reaction L-seryl-[protein] + ATP = O-phospho-L-seryl-[protein] + ADP + H(+). It carries out the reaction L-threonyl-[protein] + ATP = O-phospho-L-threonyl-[protein] + ADP + H(+). This Saccharomyces cerevisiae (strain ATCC 204508 / S288c) (Baker's yeast) protein is Probable serine/threonine-protein kinase FMP48 (FMP48).